We begin with the raw amino-acid sequence, 277 residues long: Methylglyoxal reductase DkgA (277 aa).

The Proton donor role is filled by Tyr51. Residue His107 participates in substrate binding. NADP(+) is bound at residue 187-241 (SPLAQGGKGVFDQEIIRKLAQQYNKTPAQIVIRWHLDSGLIVIPKSVTPARIREN).

Belongs to the aldo/keto reductase family. As to quaternary structure, monomer.

Its subcellular location is the cytoplasm. The catalysed reaction is hydroxyacetone + NADP(+) = methylglyoxal + NADPH + H(+). In terms of biological role, aldo-keto reductase that significantly contributes to cellular methylglyoxal detoxification by catalyzing the NADPH-dependent conversion of methylglyoxal to acetol. This Yersinia pestis protein is Methylglyoxal reductase DkgA.